A 422-amino-acid polypeptide reads, in one-letter code: Metallocarboxypeptidase A (422 aa).

A signal peptide spans Met1–Ala17. A propeptide spans Ala18–Pro112 (activation peptide). A Peptidase M14 domain is found at Ser119–Val419. Positions 179 and 182 each coordinate Zn(2+). Residues His179–Glu182, Arg237, and Asn254–Arg255 contribute to the substrate site. A disulfide bond links Cys248 and Cys271. His309 is a binding site for Zn(2+). Ser310–Tyr311 serves as a coordination point for substrate. The Proton donor/acceptor role is filled by Glu385.

It belongs to the peptidase M14 family. The cofactor is Zn(2+).

The protein localises to the secreted. Functionally, extracellular metalloprotease that contributes to pathogenicity. In Arthroderma otae (strain ATCC MYA-4605 / CBS 113480) (Microsporum canis), this protein is Metallocarboxypeptidase A (MCPA).